The following is a 90-amino-acid chain: WAP four-disulfide core domain protein 12 (90 aa).

The N-terminal stretch at 1-23 (MGSSSFLVLMVSLALVTLVAVEG) is a signal peptide. A WAP domain is found at 27 to 74 (GIEKAGVCPADNVRCFKSDPPQCHTDQDCLGERKCCYLHCGFKCVIPV). Cystine bridges form between C34–C62, C41–C66, C49–C61, and C55–C70.

The protein localises to the secreted. Functionally, antibacterial protein. Putative acid-stable proteinase inhibitor. This chain is WAP four-disulfide core domain protein 12 (WFDC12), found in Pongo abelii (Sumatran orangutan).